The sequence spans 405 residues: Replication factor C large subunit (405 aa).

47–54 (GPPGVGKT) is an ATP binding site.

The protein belongs to the activator 1 small subunits family. RfcL subfamily. Heteropentamer composed of four small subunits (RfcS) and one large subunit (RfcL). Probably interacts with PCNA subunit PCNA3.

Functionally, part of the RFC clamp loader complex which loads the PCNA sliding clamp onto DNA. The complex possesses DNA-dependent ATPase activity. In Saccharolobus solfataricus (strain ATCC 35092 / DSM 1617 / JCM 11322 / P2) (Sulfolobus solfataricus), this protein is Replication factor C large subunit (rfcL).